The following is a 90-amino-acid chain: MKKAVLIAAMFCGVVSLSSCCRIVDCCFEDPCAPSSCNPCEVIRKKERSCGGNACGSYVPSCSNPCGSTECNSQSPQVKGCTSPDGRCKQ.

Residues 1–19 (MKKAVLIAAMFCGVVSLSS) form the signal peptide. Cys-20 carries the N-palmitoyl cysteine lipid modification. Cys-20 carries the S-diacylglycerol cysteine lipid modification. Residues 69-90 (TECNSQSPQVKGCTSPDGRCKQ) form a disordered region.

In terms of assembly, part of a disulfide cross-linked outer membrane complex (COMC) composed of the major outer membrane porin (MOMP), the small cysteine-rich protein (OmcA) and the large cysteine-rich periplasmic protein (OmcB).

It is found in the cell outer membrane. In elementary bodies (EBs, the infectious stage, which is able to survive outside the host cell) provides the structural integrity of the outer envelope through disulfide cross-links with the large cysteine-rich periplasmic protein and the major outer membrane porin. It has been described in publications as the Sarkosyl-insoluble COMC (Chlamydia outer membrane complex), and serves as the functional equivalent of peptidoglycan. The chain is Small cysteine-rich outer membrane protein OmcA (omcA) from Chlamydia pneumoniae (Chlamydophila pneumoniae).